A 157-amino-acid polypeptide reads, in one-letter code: MSRNTEELQGISLLGNQKTRYPTGYAPEILEAFDNKHPDNDYFVKFVCPEFTSLCPMTGQPDFATIYIRYIPHIKMVESKSLKLYLFSFRNHGDFHEDCVNIIMKDLIALMDPKYIEVFGEFTPRGGIAIHPFANYGKAGTEFETLARKRLFEHDSQ.

Cys-55 serves as the catalytic Thioimide intermediate. Residue Asp-62 is the Proton donor of the active site. Residues 77–79 and 96–97 each bind substrate; these read VES and HE.

Belongs to the GTP cyclohydrolase I family. QueF type 1 subfamily.

It localises to the cytoplasm. The catalysed reaction is 7-aminomethyl-7-carbaguanine + 2 NADP(+) = 7-cyano-7-deazaguanine + 2 NADPH + 3 H(+). It participates in tRNA modification; tRNA-queuosine biosynthesis. Functionally, catalyzes the NADPH-dependent reduction of 7-cyano-7-deazaguanine (preQ0) to 7-aminomethyl-7-deazaguanine (preQ1). This is NADPH-dependent 7-cyano-7-deazaguanine reductase from Neisseria meningitidis serogroup C / serotype 2a (strain ATCC 700532 / DSM 15464 / FAM18).